A 368-amino-acid chain; its full sequence is uncharacterized protein (368 aa).

The protein belongs to the ornithine cyclodeaminase/mu-crystallin family.

This is an uncharacterized protein from Dictyostelium discoideum (Social amoeba).